Reading from the N-terminus, the 208-residue chain is Ribosomal RNA large subunit methyltransferase E (208 aa).

5 residues coordinate S-adenosyl-L-methionine: G62, W64, D82, D98, and D123. K163 acts as the Proton acceptor in catalysis.

This sequence belongs to the class I-like SAM-binding methyltransferase superfamily. RNA methyltransferase RlmE family.

Its subcellular location is the cytoplasm. The enzyme catalyses uridine(2552) in 23S rRNA + S-adenosyl-L-methionine = 2'-O-methyluridine(2552) in 23S rRNA + S-adenosyl-L-homocysteine + H(+). In terms of biological role, specifically methylates the uridine in position 2552 of 23S rRNA at the 2'-O position of the ribose in the fully assembled 50S ribosomal subunit. The protein is Ribosomal RNA large subunit methyltransferase E of Idiomarina loihiensis (strain ATCC BAA-735 / DSM 15497 / L2-TR).